Here is a 256-residue protein sequence, read N- to C-terminus: Glucanase inhibitor protein 2 (256 aa).

The N-terminal stretch at 1–15 (MKLISTIAAATTAFG) is a signal peptide. The Peptidase S1 domain occupies 27 to 254 (IFGGGIIPSG…ATEWINSVTK (228 aa)). A disulfide bridge links C54 with C70. N-linked (GlcNAc...) asparagine glycosylation is found at N87, N102, N107, and N157. 2 disulfides stabilise this stretch: C177–C189 and C199–C230.

The protein belongs to the peptidase S1 family. In terms of assembly, forms an apoplastic complex with host endoglucanases in tomato leaves during P.infestans infection.

It localises to the secreted. Its function is as follows. Secreted effector that suppresses host plant glucan elicitor-mediated defense responses. Targets host endoglucanases and inhibits the endoglucanase-mediated release of elicitor-active glucan oligosaccharides from P.infestans cell walls. The chain is Glucanase inhibitor protein 2 from Phytophthora infestans (Potato late blight agent).